The chain runs to 548 residues: Tyrosine-protein phosphatase non-receptor type 61F (548 aa).

The Cytoplasmic portion of the chain corresponds to 1–525; that stretch reads MSEQKTSGSG…KQLAAKKRRS (525 aa). In terms of domain architecture, Tyrosine-protein phosphatase spans 33–296; the sequence is FYKEICETCD…DFSYQAIIEG (264 aa). A disordered region spans residues 46-65; it reads KEKQFSTSESERHTNRGLNR. The residue at position 83 (S83) is a Phosphoserine. Phosphotyrosine is present on Y86. Substrate-binding positions include D203, 237 to 243, and Q281; that span reads CSAGIGR. C237 functions as the Phosphocysteine intermediate in the catalytic mechanism. 3 consecutive short sequence motifs (PXXP motif (SH3-binding)) follow at residues 327-330, 339-342, and 394-397; these read PPLP and PLAP. The disordered stretch occupies residues 386–517; that stretch reads EVADSRPLPP…RKQRENEDKQ (132 aa). A compositionally biased stretch (acidic residues) spans 404–428; that stretch reads SDSDEDYLLDDDDEDDTDEDEEYET. 2 consecutive short sequence motifs (PXXP motif (SH3-binding)) follow at residues 459-462 and 480-483; these read PAVP and PASP. Over residues 502 to 517 the composition is skewed to basic and acidic residues; the sequence is KVNDMKRKQRENEDKQ. The chain crosses the membrane as a helical span at residues 526–545; that stretch reads LLTYIAAGVVVGVICAYAYT. The Extracellular segment spans residues 546 to 548; the sequence is KLG.

Belongs to the protein-tyrosine phosphatase family. Non-receptor class 1 subfamily. In terms of assembly, interacts (via C-terminus) with dock/dreadlocks; this interaction is independent of insulin stimulation and is required for dephosphorylation of the insulin-like receptor InR.

The protein localises to the cytoplasm. The protein resides in the membrane. It is found in the endomembrane system. It localises to the nucleus. It carries out the reaction O-phospho-L-tyrosyl-[protein] + H2O = L-tyrosyl-[protein] + phosphate. Non-receptor protein tyrosine phosphatase. Required for maintaining dock/dreadlocks in its non-phosphorylated state. Negative regulator of InR/insulin-like receptor signaling through dephosphorylation of tyrosines when recruited by dock/dreadlocks. This is Tyrosine-protein phosphatase non-receptor type 61F from Drosophila melanogaster (Fruit fly).